Consider the following 187-residue polypeptide: UPF0340 protein SPT_0687 (187 aa).

The protein belongs to the UPF0340 family.

This Streptococcus pneumoniae (strain Taiwan19F-14) protein is UPF0340 protein SPT_0687.